Here is a 359-residue protein sequence, read N- to C-terminus: Ribosomal RNA small subunit methyltransferase H (359 aa).

Residues 39–41 (AGH), aspartate 58, phenylalanine 87, aspartate 108, and glutamine 115 contribute to the S-adenosyl-L-methionine site. A disordered region spans residues 339–359 (IQGSASPGRAKNTARIRTRRG). Positions 350–359 (NTARIRTRRG) are enriched in basic residues.

This sequence belongs to the methyltransferase superfamily. RsmH family.

The protein resides in the cytoplasm. It carries out the reaction cytidine(1402) in 16S rRNA + S-adenosyl-L-methionine = N(4)-methylcytidine(1402) in 16S rRNA + S-adenosyl-L-homocysteine + H(+). In terms of biological role, specifically methylates the N4 position of cytidine in position 1402 (C1402) of 16S rRNA. This is Ribosomal RNA small subunit methyltransferase H from Bifidobacterium longum (strain DJO10A).